A 394-amino-acid polypeptide reads, in one-letter code: Phosphopentomutase (394 aa).

Residues Asp-14, Asp-287, His-292, Asp-328, His-329, and His-340 each coordinate Mn(2+).

It belongs to the phosphopentomutase family. It depends on Mn(2+) as a cofactor.

The protein resides in the cytoplasm. It catalyses the reaction 2-deoxy-alpha-D-ribose 1-phosphate = 2-deoxy-D-ribose 5-phosphate. It carries out the reaction alpha-D-ribose 1-phosphate = D-ribose 5-phosphate. The protein operates within carbohydrate degradation; 2-deoxy-D-ribose 1-phosphate degradation; D-glyceraldehyde 3-phosphate and acetaldehyde from 2-deoxy-alpha-D-ribose 1-phosphate: step 1/2. Its function is as follows. Isomerase that catalyzes the conversion of deoxy-ribose 1-phosphate (dRib-1-P) and ribose 1-phosphate (Rib-1-P) to deoxy-ribose 5-phosphate (dRib-5-P) and ribose 5-phosphate (Rib-5-P), respectively. This chain is Phosphopentomutase, found in Listeria innocua serovar 6a (strain ATCC BAA-680 / CLIP 11262).